Consider the following 45-residue polypeptide: Toxin Bcs III 15.09 (45 aa).

Residues 2 to 44 enclose the EGF-like domain; the sequence is QGTACTGEHAHNFCLNGGTCRHIQSLGEYYCICPEGYTGHRCE. Disulfide bonds link C6-C21, C15-C32, and C34-C43.

The protein resides in the secreted. It localises to the nematocyst. Its function is as follows. Has both toxic and EGF activity. This Bunodosoma caissarum (Sea anemone) protein is Toxin Bcs III 15.09.